Consider the following 377-residue polypeptide: Dual-specificity RNA methyltransferase RlmN (377 aa).

The active-site Proton acceptor is the E102. Residues 108–345 form the Radical SAM core domain; that stretch reads EPDRRTLCVS…AVVRKNRGGD (238 aa). C115 and C350 are joined by a disulfide. Residues C122, C126, and C129 each coordinate [4Fe-4S] cluster. S-adenosyl-L-methionine contacts are provided by residues 177 to 178, S209, 231 to 233, and N307; these read GE and SLN. Catalysis depends on C350, which acts as the S-methylcysteine intermediate. The interval 354–377 is disordered; sequence AAEGGPGDPRRPAPPPLTRLPAAG.

This sequence belongs to the radical SAM superfamily. RlmN family. [4Fe-4S] cluster is required as a cofactor.

It localises to the cytoplasm. The catalysed reaction is adenosine(2503) in 23S rRNA + 2 reduced [2Fe-2S]-[ferredoxin] + 2 S-adenosyl-L-methionine = 2-methyladenosine(2503) in 23S rRNA + 5'-deoxyadenosine + L-methionine + 2 oxidized [2Fe-2S]-[ferredoxin] + S-adenosyl-L-homocysteine. The enzyme catalyses adenosine(37) in tRNA + 2 reduced [2Fe-2S]-[ferredoxin] + 2 S-adenosyl-L-methionine = 2-methyladenosine(37) in tRNA + 5'-deoxyadenosine + L-methionine + 2 oxidized [2Fe-2S]-[ferredoxin] + S-adenosyl-L-homocysteine. Functionally, specifically methylates position 2 of adenine 2503 in 23S rRNA and position 2 of adenine 37 in tRNAs. m2A2503 modification seems to play a crucial role in the proofreading step occurring at the peptidyl transferase center and thus would serve to optimize ribosomal fidelity. In Anaeromyxobacter sp. (strain Fw109-5), this protein is Dual-specificity RNA methyltransferase RlmN.